A 395-amino-acid chain; its full sequence is Ribosomal RNA large subunit methyltransferase I (395 aa).

One can recognise a PUA domain in the interval 2-79 (SSRVTLHPGR…QNESVDNGFF (78 aa)).

It belongs to the methyltransferase superfamily. RlmI family.

The protein resides in the cytoplasm. The catalysed reaction is cytidine(1962) in 23S rRNA + S-adenosyl-L-methionine = 5-methylcytidine(1962) in 23S rRNA + S-adenosyl-L-homocysteine + H(+). Functionally, specifically methylates the cytosine at position 1962 (m5C1962) of 23S rRNA. The sequence is that of Ribosomal RNA large subunit methyltransferase I from Pseudoalteromonas atlantica (strain T6c / ATCC BAA-1087).